Consider the following 816-residue polypeptide: Cation/H(+) antiporter 8 (816 aa).

12 helical membrane passes run 64–84 (PKLEIVILLVFFLWQGFNILF), 97–117 (MMLAGLLLNVLVTLSGENSII), 127–147 (IDVAGCLGSFGFLIFWFLKGV), 163–183 (VTGVAAVTFPIVVGFLLFNLK), 197–214 (VMLLMESITSFSGIARLL), 227–247 (VALSSALVSDIVGLLLLIANV), 255–275 (ADGLAILTEITLFLVIAFAVV), 297–317 (IHGVLVLVCLSCMYWEDLSQF), 343–363 (LESFNFGIILPLFLTAVMLRT), 382–402 (FAVASLVLLIFLLKLSVSVIV), 413–433 (SIILALIMSHKGIIELSFYLF), and 447–467 (ILVLSIVLNSLLIPMAIGFLY).

This sequence belongs to the monovalent cation:proton antiporter 2 (CPA2) transporter (TC 2.A.37) family. CHX (TC 2.A.37.4) subfamily. Specifically expressed in pollen.

The protein localises to the membrane. May operate as a cation/H(+) antiporter. The polypeptide is Cation/H(+) antiporter 8 (CHX8) (Arabidopsis thaliana (Mouse-ear cress)).